The primary structure comprises 445 residues: Methylthioribose-1-phosphate isomerase (445 aa).

Asp286 serves as the catalytic Proton donor.

The protein belongs to the eIF-2B alpha/beta/delta subunits family. MtnA subfamily.

Its subcellular location is the cytoplasm. The protein localises to the nucleus. The enzyme catalyses 5-(methylsulfanyl)-alpha-D-ribose 1-phosphate = 5-(methylsulfanyl)-D-ribulose 1-phosphate. Its pathway is amino-acid biosynthesis; L-methionine biosynthesis via salvage pathway; L-methionine from S-methyl-5-thio-alpha-D-ribose 1-phosphate: step 1/6. Functionally, catalyzes the interconversion of methylthioribose-1-phosphate (MTR-1-P) into methylthioribulose-1-phosphate (MTRu-1-P). This is Methylthioribose-1-phosphate isomerase (mri1) from Sclerotinia sclerotiorum (strain ATCC 18683 / 1980 / Ss-1) (White mold).